The chain runs to 478 residues: Ribosomal RNA small subunit methyltransferase F (478 aa).

S-adenosyl-L-methionine is bound by residues 126–132 (AAAPGSK), Glu-150, Asp-177, and Asp-195. Residue Cys-248 is the Nucleophile of the active site.

It belongs to the class I-like SAM-binding methyltransferase superfamily. RsmB/NOP family.

The protein resides in the cytoplasm. It catalyses the reaction cytidine(1407) in 16S rRNA + S-adenosyl-L-methionine = 5-methylcytidine(1407) in 16S rRNA + S-adenosyl-L-homocysteine + H(+). Specifically methylates the cytosine at position 1407 (m5C1407) of 16S rRNA. The chain is Ribosomal RNA small subunit methyltransferase F from Erwinia tasmaniensis (strain DSM 17950 / CFBP 7177 / CIP 109463 / NCPPB 4357 / Et1/99).